The chain runs to 372 residues: Gustatory and pheromone receptor 39a, isoform B (372 aa).

Residues 1–32 lie on the Cytoplasmic side of the membrane; that stretch reads MGTRNRKLLFFLHYQRYLGLTNLDFSKSLHIY. A helical transmembrane segment spans residues 33-53; sequence WLHGTWSSTAIQIVVVGVFMA. Residues 54-59 are Extracellular-facing; it reads ALLGAL. The chain crosses the membrane as a helical span at residues 60 to 80; it reads AESLYYMETKSQTGNTFDNAV. Residues 81-122 are Cytoplasmic-facing; the sequence is ILTTSVTQLLANLWLRSQQKSQVNLLQRLSQVVELLQFEPYA. The helical transmembrane segment at 123–143 threads the bilayer; it reads VPQFRWLYRIWLLVCLIYGAM. Topologically, residues 144–147 are extracellular; the sequence is VTHF. Residues 148-168 form a helical membrane-spanning segment; sequence GINWLTTMQISRVLTLIGFVY. Residues 169 to 224 lie on the Cytoplasmic side of the membrane; the sequence is RCVLANFQFTCYTGMVVILKKLLQVQVKQLEHLVSTTTISMAGVAGCLRTHDEILL. A helical transmembrane segment spans residues 225 to 245; sequence LGQRELIAVYGGVILFLFIYQ. The Extracellular portion of the chain corresponds to 246 to 265; sequence VMQCILIFYISNLEGFHSSN. Residues 266–286 form a helical membrane-spanning segment; that stretch reads DLVLIFCWLAPMLFYLILPLV. Topologically, residues 287-348 are cytoplasmic; the sequence is VNDIHNQANK…KSTLFKLFTA (62 aa). The chain crosses the membrane as a helical span at residues 349-368; the sequence is IFTYMVILVQFKEMENSTKS. Residue isoleucine 369 is a topological domain, extracellular.

Belongs to the insect chemoreceptor superfamily. Gustatory receptor (GR) family. Gr21a subfamily. As to expression, expressed in the adult labellar chemosensory neurons. In larvae, is expressed in neurons of the terminal external chemosensory organ, as well as in the dorsal and posterior pharyngeal sense organs.

Its subcellular location is the cell membrane. Functionally, gustatory receptor which mediates acceptance or avoidance behavior, depending on its substrates. Plays a role in sustaining courtship behavior in males, possibly through the reception of a stimulating arrestant pheromone. The sequence is that of Gustatory and pheromone receptor 39a, isoform B (Gr39a) from Drosophila melanogaster (Fruit fly).